The sequence spans 351 residues: Photosystem II D2 protein (351 aa).

The chain crosses the membrane as a helical span at residues 39–59; it reads CAFLALGGWLTGTTFVTSWYT. Position 116 (His116) interacts with chlorophyll a. The chain crosses the membrane as a helical span at residues 123–139; that stretch reads GFMLRQFEIARLVGIRP. Pheophytin a contacts are provided by Gln128 and Asn141. Residues 151-164 form a helical membrane-spanning segment; the sequence is VFVSVFLMYPLGQS. Position 196 (His196) interacts with chlorophyll a. A helical membrane pass occupies residues 206–226; that stretch reads GALLCAIHGATVENTLFEDGE. Residues His213 and Phe260 each contribute to the a plastoquinone site. His213 provides a ligand contact to Fe cation. His267 is a Fe cation binding site. A helical membrane pass occupies residues 277 to 293; that stretch reads GLWMSAVGIVGLALNLR.

This sequence belongs to the reaction center PufL/M/PsbA/D family. In terms of assembly, PSII is composed of 1 copy each of membrane proteins PsbA, PsbB, PsbC, PsbD, PsbE, PsbF, PsbH, PsbI, PsbJ, PsbK, PsbL, PsbM, PsbT, PsbX, PsbY, PsbZ, Psb30/Ycf12, peripheral proteins PsbO, CyanoQ (PsbQ), PsbU, PsbV and a large number of cofactors. It forms dimeric complexes. It depends on The D1/D2 heterodimer binds P680, chlorophylls that are the primary electron donor of PSII, and subsequent electron acceptors. It shares a non-heme iron and each subunit binds pheophytin, quinone, additional chlorophylls, carotenoids and lipids. There is also a Cl(-1) ion associated with D1 and D2, which is required for oxygen evolution. The PSII complex binds additional chlorophylls, carotenoids and specific lipids. as a cofactor.

It localises to the cellular thylakoid membrane. It catalyses the reaction 2 a plastoquinone + 4 hnu + 2 H2O = 2 a plastoquinol + O2. Functionally, photosystem II (PSII) is a light-driven water:plastoquinone oxidoreductase that uses light energy to abstract electrons from H(2)O, generating O(2) and a proton gradient subsequently used for ATP formation. It consists of a core antenna complex that captures photons, and an electron transfer chain that converts photonic excitation into a charge separation. The D1/D2 (PsbA/PsbD) reaction center heterodimer binds P680, the primary electron donor of PSII as well as several subsequent electron acceptors. D2 is needed for assembly of a stable PSII complex. This is Photosystem II D2 protein from Trichormus variabilis (strain ATCC 29413 / PCC 7937) (Anabaena variabilis).